A 171-amino-acid polypeptide reads, in one-letter code: 3-hydroxydecanoyl-[acyl-carrier-protein] dehydratase (171 aa).

The active site involves His70.

The protein belongs to the thioester dehydratase family. FabA subfamily. As to quaternary structure, homodimer.

It is found in the cytoplasm. It catalyses the reaction a (3R)-hydroxyacyl-[ACP] = a (2E)-enoyl-[ACP] + H2O. It carries out the reaction (3R)-hydroxydecanoyl-[ACP] = (2E)-decenoyl-[ACP] + H2O. The enzyme catalyses (2E)-decenoyl-[ACP] = (3Z)-decenoyl-[ACP]. It participates in lipid metabolism; fatty acid biosynthesis. Necessary for the introduction of cis unsaturation into fatty acids. Catalyzes the dehydration of (3R)-3-hydroxydecanoyl-ACP to E-(2)-decenoyl-ACP and then its isomerization to Z-(3)-decenoyl-ACP. Can catalyze the dehydratase reaction for beta-hydroxyacyl-ACPs with saturated chain lengths up to 16:0, being most active on intermediate chain length. In Xanthomonas campestris pv. campestris (strain 8004), this protein is 3-hydroxydecanoyl-[acyl-carrier-protein] dehydratase.